Consider the following 100-residue polypeptide: Large ribosomal subunit protein uL23 (100 aa).

The protein belongs to the universal ribosomal protein uL23 family. As to quaternary structure, part of the 50S ribosomal subunit. Contacts protein L29, and trigger factor when it is bound to the ribosome.

Its function is as follows. One of the early assembly proteins it binds 23S rRNA. One of the proteins that surrounds the polypeptide exit tunnel on the outside of the ribosome. Forms the main docking site for trigger factor binding to the ribosome. The protein is Large ribosomal subunit protein uL23 of Prochlorococcus marinus (strain MIT 9313).